The chain runs to 394 residues: Elongation factor Tu (394 aa).

The tr-type G domain maps to 10–204 (KPHVNVGTIG…ALDSYIPEPE (195 aa)). Residues 19–26 (GHVDHGKT) form a G1 region. 19 to 26 (GHVDHGKT) is a GTP binding site. T26 contacts Mg(2+). Positions 60–64 (GITIA) are G2. Residues 81–84 (DCPG) form a G3 region. GTP contacts are provided by residues 81 to 85 (DCPGH) and 136 to 139 (NKCD). The interval 136 to 139 (NKCD) is G4. Positions 174 to 176 (SAL) are G5.

Belongs to the TRAFAC class translation factor GTPase superfamily. Classic translation factor GTPase family. EF-Tu/EF-1A subfamily. As to quaternary structure, monomer.

It is found in the cytoplasm. It carries out the reaction GTP + H2O = GDP + phosphate + H(+). In terms of biological role, GTP hydrolase that promotes the GTP-dependent binding of aminoacyl-tRNA to the A-site of ribosomes during protein biosynthesis. The protein is Elongation factor Tu of Vibrio campbellii (strain ATCC BAA-1116).